The primary structure comprises 776 residues: Outer capsid protein VP4 (776 aa).

The spike head stretch occupies residues 65–224 (LDGPYQPTTF…KCTEYINNGL (160 aa)). A disulfide bridge links C203 with C216. The segment at 248-479 (AQPNQDIVVS…LISLVPSNDD (232 aa)) is spike body and stalk (antigen domain). The short motif at 308 to 310 (DGE) is the DGE motif; interaction with ITGA2/ITGB1 heterodimer element. C318 and C380 form a disulfide bridge. The segment at 389–409 (IPVGNYPVMTGGAVSLHSAGV) is hydrophobic; possible role in virus entry into host cell. The YGL motif; interaction with ITGA4 motif lies at 448-450 (YGL). A coiled-coil region spans residues 484–518 (IINSVTVRQDLERQLGELRDEFNNLSQQIAMSQLI). The segment at 510 to 776 (QQIAMSQLID…IESLIMQCRL (267 aa)) is spike foot. Residues 644–646 (KID) carry the KID motif; interaction with HSPA8 motif.

This sequence belongs to the rotavirus VP4 family. As to quaternary structure, homotrimer. VP4 adopts a dimeric appearance above the capsid surface, while forming a trimeric base anchored inside the capsid layer. Only hints of the third molecule are observed above the capsid surface. It probably performs a series of molecular rearrangements during viral entry. Prior to trypsin cleavage, it is flexible. The priming trypsin cleavage triggers its rearrangement into rigid spikes with approximate two-fold symmetry of their protruding parts. After an unknown second triggering event, cleaved VP4 may undergo another rearrangement, in which two VP5* subunits fold back on themselves and join a third subunit to form a tightly associated trimer, shaped like a folded umbrella. Interacts with VP6. Interacts with VP7. In terms of assembly, homotrimer. The trimer is coiled-coil stabilized by its C-terminus, however, its N-terminus, known as antigen domain or 'body', seems to be flexible allowing it to self-associate either as a dimer or a trimer. In terms of processing, proteolytic cleavage by trypsin results in activation of VP4 functions and greatly increases infectivity. The penetration into the host cell is dependent on trypsin treatment of VP4. It produces two peptides, VP5* and VP8* that remain associated with the virion. Cleavage of VP4 by trypsin probably occurs in vivo in the lumen of the intestine prior to infection of enterocytes. Trypsin seems to be incorporated into the three-layered viral particles but remains inactive as long as the viral outer capsid is intact and would only be activated upon the solubilization of the latter.

It is found in the virion. The protein resides in the host rough endoplasmic reticulum. The protein localises to the host cell membrane. It localises to the host cytoplasm. Its subcellular location is the host cytoskeleton. It is found in the host endoplasmic reticulum-Golgi intermediate compartment. Its function is as follows. Spike-forming protein that mediates virion attachment to the host epithelial cell receptors and plays a major role in cell penetration, determination of host range restriction and virulence. Rotavirus attachment and entry into the host cell probably involves multiple sequential contacts between the outer capsid proteins VP4 and VP7, and the cell receptors. It is subsequently lost, together with VP7, following virus entry into the host cell. Following entry into the host cell, low intracellular or intravesicular Ca(2+) concentration probably causes the calcium-stabilized VP7 trimers to dissociate from the virion. This step is probably necessary for the membrane-disrupting entry step and the release of VP4, which is locked onto the virion by VP7. During the virus exit from the host cell, VP4 seems to be required to target the newly formed virions to the host cell lipid rafts. In terms of biological role, forms the spike 'foot' and 'body' and acts as a membrane permeabilization protein that mediates release of viral particles from endosomal compartments into the cytoplasm. During entry, the part of VP5* that protrudes from the virus folds back on itself and reorganizes from a local dimer to a trimer. This reorganization may be linked to membrane penetration by exposing VP5* hydrophobic region. In integrin-dependent strains, VP5* targets the integrin heterodimer ITGA2/ITGB1 for cell attachment. Forms the head of the spikes and mediates the recognition of specific host cell surface glycans. It is the viral hemagglutinin and an important target of neutralizing antibodies. In sialic acid-dependent strains, VP8* binds to host cell sialic acid, most probably a ganglioside, providing the initial contact. In some other strains, VP8* mediates the attachment to histo-blood group antigens (HBGAs) for viral entry. The protein is Outer capsid protein VP4 of Rotavirus A (strain RVA/Cow/Canada/C486/1977/G6P6[1]) (RV-A).